Reading from the N-terminus, the 60-residue chain is Large ribosomal subunit protein bL32 (60 aa).

Positions 1-60 are disordered; the sequence is MAVQQNKKSRSARDMRRSHDALSENALSVEKTTGEVHLRHHVSPEGVYRGRKVVDKGADE. The span at 11–22 shows a compositional bias: basic and acidic residues; that stretch reads SARDMRRSHDAL.

It belongs to the bacterial ribosomal protein bL32 family.

This is Large ribosomal subunit protein bL32 from Pseudomonas putida (strain ATCC 700007 / DSM 6899 / JCM 31910 / BCRC 17059 / LMG 24140 / F1).